Reading from the N-terminus, the 136-residue chain is Antistasin (136 aa).

The signal sequence occupies residues 1 to 17 (MIKLAILLLFTVAIVRC). The residue at position 18 (glutamine 18) is a Pyrrolidone carboxylic acid. Intrachain disulfides connect cysteine 25/cysteine 36, cysteine 30/cysteine 43, cysteine 45/cysteine 65, cysteine 50/cysteine 68, cysteine 54/cysteine 70, cysteine 79/cysteine 90, cysteine 84/cysteine 97, cysteine 99/cysteine 120, cysteine 105/cysteine 123, and cysteine 109/cysteine 125. In terms of domain architecture, Antistasin-like 1 spans 45–70 (CSGVRCRMHCPHGFQRSRYGCEFCKC). Residues 100 to 125 (KIDINCRKTCPNGLKRDKLGCEYCEC) enclose the Antistasin-like 2 domain. Residues 114–117 (KRDK) and 128–135 (KRKLIPRL) contribute to the heparin site.

It belongs to the protease inhibitor I15 (antistasin) family.

It localises to the secreted. Its function is as follows. This highly disulfide-bonded protein is a potent inhibitor of factor Xa. May have therapeutic utility as an anticoagulant. Also exhibits a strong metastatic activity. This is Antistasin from Haementeria officinalis (Mexican leech).